The following is a 452-amino-acid chain: Coproporphyrinogen III oxidase (452 aa).

FAD is bound by residues 10-15, 36-37, 58-61, V242, W390, and 426-428; these read GGGISG, EP, GAEA, and IGV.

The protein belongs to the protoporphyrinogen/coproporphyrinogen oxidase family. Coproporphyrinogen III oxidase subfamily. FAD is required as a cofactor.

The protein resides in the cytoplasm. The catalysed reaction is coproporphyrinogen III + 3 O2 = coproporphyrin III + 3 H2O2. The protein operates within porphyrin-containing compound metabolism; protoheme biosynthesis. Involved in coproporphyrin-dependent heme b biosynthesis. Catalyzes the oxidation of coproporphyrinogen III to coproporphyrin III. This Mycobacterium bovis (strain ATCC BAA-935 / AF2122/97) protein is Coproporphyrinogen III oxidase.